Consider the following 574-residue polypeptide: MPKFDVSKRDLERLVGKTFSVEEWEDLFLYAKCELDDVWEENGEIYFKADSKDTNRPDLWSAEGIARQIRFALGFQKGLPKYEIEKSDVVVYVDEKLKDIRPYGVYAIVEGLNIDEEALRQMINLQEKVALTFGRRRREVAIGIFDFDKVKPPIYYRAAEKTEKFVPLGYDEEMTLEEILEKHEKGREYGHLIKDKPYYPLLVDSEGKVLSMPPVINSETTGRVTTETKNVFVDITGWDLNKVMLALNVVVTALAERGGKIKSVKVVYPDFEIETPDLTPKEFEVELDYIRKLAGLELSDGEIKELLERMMYEVELENRRAKLRYPAFRDDIMHARDVLEDVLIAYGYNEIEPEEPKLAVQGRGDKFIEFEDAVRELMVGFGLQEVMTFNLTNREAQYDRMNLPCGEHQEECRDYFNHPPAELVEIENPISPKWSALRNWLIPSLLDFLSQNTHEEYPQKLFEVGKATLIDESRETKTVSESKLAVALAHPRVTFTEAKEILEGVMRHLGFEYELEEAEHPSFIPGRVGKIIVNGETIGVIGEIHPAVLENWGIEMPVAAFELFLAPLYTEPYL.

The B5 domain maps to 278–353; the sequence is LTPKEFEVEL…IAYGYNEIEP (76 aa). Residues aspartate 331, aspartate 337, glutamate 340, and aspartate 341 each coordinate Mg(2+).

The protein belongs to the phenylalanyl-tRNA synthetase beta subunit family. Type 2 subfamily. Tetramer of two alpha and two beta subunits. Mg(2+) serves as cofactor.

The protein localises to the cytoplasm. It catalyses the reaction tRNA(Phe) + L-phenylalanine + ATP = L-phenylalanyl-tRNA(Phe) + AMP + diphosphate + H(+). The sequence is that of Phenylalanine--tRNA ligase beta subunit from Thermococcus kodakarensis (strain ATCC BAA-918 / JCM 12380 / KOD1) (Pyrococcus kodakaraensis (strain KOD1)).